Here is a 187-residue protein sequence, read N- to C-terminus: F-box protein At5g41720 (187 aa).

One can recognise an F-box domain in the interval 2–49 (MMNSPLDYDVLLEIMSYCPATEMAKFRLLSKECNKRSYEMSFINRHLH).

The protein is F-box protein At5g41720 of Arabidopsis thaliana (Mouse-ear cress).